Reading from the N-terminus, the 269-residue chain is JmjC domain-containing protein 8 (269 aa).

A signal peptide spans 1–24 (MAAAGRRGLLLLFVLWMMVTVILP). N-linked (GlcNAc...) asparagine glycosylation is found at Asn-135, Asn-145, and Asn-214. In terms of domain architecture, JmjC spans 136–269 (DTLYFFGDNN…TSVFISTFLG (134 aa)).

As to quaternary structure, oligomer. Dimer. Interacts with PKM; regulates angiogenesis and metabolism. Post-translationally, N-glycosylated.

The protein resides in the endoplasmic reticulum lumen. The protein localises to the cytoplasm. Its function is as follows. Functions as a positive regulator of TNF-induced NF-kappaB signaling. Regulates angiogenesis and cellular metabolism through interaction with PKM. The chain is JmjC domain-containing protein 8 from Mus musculus (Mouse).